The following is a 358-amino-acid chain: tRNA N6-adenosine threonylcarbamoyltransferase (358 aa).

The Fe cation site is built by His122 and His126. Residues Leu145–Gly149, Asp178, Gly191, and Asn287 contribute to the substrate site. Asp315 contacts Fe cation.

It belongs to the KAE1 / TsaD family. It depends on Fe(2+) as a cofactor.

It is found in the cytoplasm. The enzyme catalyses L-threonylcarbamoyladenylate + adenosine(37) in tRNA = N(6)-L-threonylcarbamoyladenosine(37) in tRNA + AMP + H(+). Its function is as follows. Required for the formation of a threonylcarbamoyl group on adenosine at position 37 (t(6)A37) in tRNAs that read codons beginning with adenine. Is involved in the transfer of the threonylcarbamoyl moiety of threonylcarbamoyl-AMP (TC-AMP) to the N6 group of A37, together with TsaE and TsaB. TsaD likely plays a direct catalytic role in this reaction. This chain is tRNA N6-adenosine threonylcarbamoyltransferase, found in Hydrogenovibrio crunogenus (strain DSM 25203 / XCL-2) (Thiomicrospira crunogena).